The sequence spans 55 residues: Accessory gland-specific peptide 70A (55 aa).

A signal peptide spans 1–19 (MKTLSVFLVLVCLLGLVQS). Hydroxyproline occurs at positions 28, 32, 34, and 38. Cys43 and Cys55 are oxidised to a cystine.

Main cells of the accessory glands of males (paragonial gland).

The protein resides in the secreted. Represses female sexual receptivity and stimulates oviposition. This is Accessory gland-specific peptide 70A (Acp70A) from Drosophila sechellia (Fruit fly).